The following is a 358-amino-acid chain: C-X-C chemokine receptor type 4 (358 aa).

An important for chemokine binding and signaling region spans residues 1 to 25 (MDGFSGGIDINIFDSNSTENGSGDF). Residues 1 to 44 (MDGFSGGIDINIFDSNSTENGSGDFEDFSEPCFMHDNSDFNRIF) lie on the Extracellular side of the membrane. 2 N-linked (GlcNAc...) asparagine glycosylation sites follow: asparagine 16 and asparagine 20. Cystine bridges form between cysteine 32-cysteine 281 and cysteine 113-cysteine 190. The chain crosses the membrane as a helical span at residues 45-67 (LPTIYSFIFLLGIIGNGLVVVVM). Residues 68–81 (GYQKKSRTMTDKYR) are Cytoplasmic-facing. Residues 82–103 (LHLSVADLLFVFTLPFWSVDAA) form a helical membrane-spanning segment. A chemokine binding region spans residues 98-101 (WSVD). At 104-114 (IGWYFKEFLCK) the chain is on the extracellular side. The chain crosses the membrane as a helical span at residues 115 to 134 (AVHVIYTVNLYSSVLILAFI). Residues 117–121 (HVIYT) form a chemokine binding region. Topologically, residues 135–158 (SLDRYLAIVHATNSQGSRKMLADK) are cytoplasmic. Residues 139-151 (YLAIVHATNSQGS) are involved in dimerization; when bound to chemokine. The helical transmembrane segment at 159–178 (VVYAGVWLPALLLTVPDLVF) threads the bilayer. Residues 179 to 202 (ARVSDENGQFVCDRIYPIDNRETW) are Extracellular-facing. The interval 190-194 (CDRIY) is chemokine binding, important for signaling. A helical transmembrane segment spans residues 203–223 (TVGFRFLHITVGLILPGLIIL). Topologically, residues 224 to 248 (ICYCVIISKLSHSKGHQKRKALKTT) are cytoplasmic. A helical transmembrane segment spans residues 249-268 (VILILAFFACWLPYYVCLTT). Residues 269-289 (DTFMLLGLLKADCIWENTLHK) are Extracellular-facing. The helical transmembrane segment at 290-309 (AISITEALAFFHCCLNPILY) threads the bilayer. Residues 310-358 (AFLGAKFKTSAQNAFTSVSRGSSLKILSKKRAGLSSVSTESESSSFHSS) are Cytoplasmic-facing. Positions 338–358 (KKRAGLSSVSTESESSSFHSS) are disordered. The span at 344 to 358 (SSVSTESESSSFHSS) shows a compositional bias: low complexity.

Belongs to the G-protein coupled receptor 1 family. As to quaternary structure, monomer. Can form dimers. Post-translationally, sulfation is required for efficient binding of cxcl12/sdf-1alpha and promotes its dimerization. O- and N-glycosylated.

It localises to the cell membrane. It is found in the cytoplasm. The protein resides in the nucleus. The protein localises to the early endosome. Its subcellular location is the late endosome. It localises to the lysosome. Functionally, receptor for the C-X-C chemokine cxcl12/sdf-1. Transduces a signal by increasing the intracellular calcium ion level. Signaling with cxcl12/sdf-1 mediates the directional movement of mesodermal cells during gastrulation. May play a role in the migration of embryonic presumptive primordial germ cells (pPGCs). May also be involved in regulating migration of hematopoietic stem cells into the larval liver. This chain is C-X-C chemokine receptor type 4, found in Xenopus tropicalis (Western clawed frog).